A 58-amino-acid chain; its full sequence is Large ribosomal subunit protein eL37 (58 aa).

Residues Cys20, Cys23, Cys35, and Cys38 each coordinate Zn(2+). Residues 20-38 form a C4-type zinc finger; sequence CRRCGEKSYHVKKERCSSC. The segment at 39-58 is disordered; that stretch reads GFGDSASRRGYAWQSKSGDN.

It belongs to the eukaryotic ribosomal protein eL37 family. It depends on Zn(2+) as a cofactor.

Binds to the 23S rRNA. The protein is Large ribosomal subunit protein eL37 of Halorubrum lacusprofundi (strain ATCC 49239 / DSM 5036 / JCM 8891 / ACAM 34).